Here is a 279-residue protein sequence, read N- to C-terminus: Putative phosphoenolpyruvate synthase regulatory protein (279 aa).

An ADP-binding site is contributed by 159-166 (GVSRSGKT).

This sequence belongs to the pyruvate, phosphate/water dikinase regulatory protein family. PSRP subfamily.

The enzyme catalyses [pyruvate, water dikinase] + ADP = [pyruvate, water dikinase]-phosphate + AMP + H(+). It carries out the reaction [pyruvate, water dikinase]-phosphate + phosphate + H(+) = [pyruvate, water dikinase] + diphosphate. Functionally, bifunctional serine/threonine kinase and phosphorylase involved in the regulation of the phosphoenolpyruvate synthase (PEPS) by catalyzing its phosphorylation/dephosphorylation. This chain is Putative phosphoenolpyruvate synthase regulatory protein, found in Ralstonia nicotianae (strain ATCC BAA-1114 / GMI1000) (Ralstonia solanacearum).